The sequence spans 186 residues: Lipid A palmitoyltransferase PagP (186 aa).

An N-terminal signal peptide occupies residues 1 to 25 (MNVSKYVAIFFFVFIQLISVGKVFA). Catalysis depends on residues H58, D101, and S102.

Belongs to the lipid A palmitoyltransferase family. As to quaternary structure, homodimer.

It is found in the cell outer membrane. The enzyme catalyses lipid A (E. coli) + a 1-hexadecanoyl-2-acyl-sn-glycero-3-phosphocholine = hepta-acyl lipid A (E. coli) + a 2-acyl-sn-glycero-3-phosphocholine. It carries out the reaction lipid IIA + a 1-hexadecanoyl-2-acyl-sn-glycero-3-phosphocholine = lipid IIB + a 2-acyl-sn-glycero-3-phosphocholine. The catalysed reaction is lipid IVA (E. coli) + a 1-hexadecanoyl-2-acyl-sn-glycero-3-phosphocholine = lipid IVB (E. coli) + a 2-acyl-sn-glycero-3-phosphocholine. In terms of biological role, transfers a palmitate residue from the sn-1 position of a phospholipid to the N-linked hydroxymyristate on the proximal unit of lipid A or its precursors. This Escherichia coli O6:H1 (strain CFT073 / ATCC 700928 / UPEC) protein is Lipid A palmitoyltransferase PagP.